The primary structure comprises 160 residues: SKP1-like protein 1A (160 aa).

The interval 102 to 160 (ILAANYLNIKNLLDLTCQTVADMIKGKTPEEIRTTFNIKNDFTPEEEEEVRRENQWAFE) is interaction with the F-box domain of F-box proteins.

This sequence belongs to the SKP1 family. As to quaternary structure, part of a SCF E3 ubiquitin ligase complex composed of SKP1, CUL1, RBX1 (RBX1A or RBX1B) and F-box proteins. Interacts with SKIP1, SKIP2, SKIP3, SKIP4, SKIP6, FIB1/SKIP7, SKIP8, PP2A11/SKIP10, SKIP11, PP2B11/SKIP12, PP2A14/SKIP13, SKIP14, SKIP15, SKIP16, SKIP19/FBL20, SKIP20, PP2B1/SKIP21, SKIP22, SKIP23, SKIP24, SKIP25, TULP10/SKIP26, SKIP27, SKIP28/MEE11, AFR/SKIP29, SKIP30, SKIP31, SKIP32/FBP7, SKIP33, SKIP35, ADO1/ZTL, ADO2/LKP2, ADO3/FKF1, AFR, COI1, DOR, EBF1, EBF2, EID1, ORE9, PP2A13/SKIP9, TIR1, UFO, SKP2A, CPR1/CPR30, FBL17, NUP58, At1g55000, At1g67340, At1g78100, At3g04660, At3g61590, At4g38940 and At5g49610. The SKP1A subunit of the SCF E3 ubiquitin ligase complex can interact directly with KIN10, KIN11 and the proteasome subunit PAD1. This interaction can be disrupted by PRL1. In case of polerovirus infection, part of a SCF P0 complex composed of the viral silencing suppressor P0, SKP1 and CUL1. Interacts with turnip yellows virus P0. Interacts with VBF and Agrobacterium virF. Binds to KIB1. In terms of tissue distribution, accumulates only in meristematic cells. Expressed in inflorescence, shoot and root apical meristems, as well as in developing organs such as gametocytes and seeds. Also detected in cortical layer and epidermis of roots, leaves, pith and vascular bundle of young stem, young floral buds and organ primordia, pollen and through the valve of siliques. Not detectable in mature root tissues.

Its subcellular location is the nucleus. It is found in the cytoplasm. It localises to the cytoskeleton. The protein localises to the spindle. The protein resides in the phragmoplast. The protein operates within protein modification; protein ubiquitination. Its function is as follows. Involved in ubiquitination and subsequent proteasomal degradation of target proteins. Together with CUL1, RBX1 and a F-box protein, it forms a SCF E3 ubiquitin ligase complex. The functional specificity of this complex depends on the type of F-box protein. In the SCF complex, it serves as an adapter that links the F-box protein to CUL1. SCF(UFO) is required for vegetative and floral organ development as well as for male gametogenesis. SCF(TIR1) is involved in auxin signaling pathway. SCF(COI1) regulates responses to jasmonates. SCF(EID1) and SCF(AFR) are implicated in phytochrome A light signaling. SCF(ADO1), SCF(ADO2), SCF(ADO3) are related to the circadian clock. SCF(ORE9) seems to be involved in senescence. SCF(EBF1/EBF2) may regulate ethylene signaling. Plays a role during embryogenesis and early postembryonic development, especially during cell elongation and division. Contributes to the correct chromosome segregation during tetrad formation. This is SKP1-like protein 1A from Arabidopsis thaliana (Mouse-ear cress).